Reading from the N-terminus, the 134-residue chain is L-ectoine synthase (134 aa).

This sequence belongs to the ectoine synthase family.

The enzyme catalyses (2S)-4-acetamido-2-aminobutanoate = L-ectoine + H2O. It participates in amine and polyamine biosynthesis; ectoine biosynthesis; L-ectoine from L-aspartate 4-semialdehyde: step 3/3. Its function is as follows. Catalyzes the circularization of gamma-N-acetyl-alpha,gamma-diaminobutyric acid (ADABA) to ectoine (1,4,5,6-tetrahydro-2-methyl-4-pyrimidine carboxylic acid), which is an excellent osmoprotectant. This chain is L-ectoine synthase, found in Thermobifida fusca (strain YX).